Consider the following 341-residue polypeptide: Two-component response regulator EHD1 (341 aa).

The 116-residue stretch at R12 to F127 folds into the Response regulatory domain. D63 carries the 4-aspartylphosphate modification. In terms of domain architecture, HTH myb-type spans D195–K254. A DNA-binding region (H-T-H motif) is located at residues P225–R250.

In terms of processing, two-component system major event consists of a His-to-Asp phosphorelay between a sensor histidine kinase (HK) and a response regulator (RR). In plants, the His-to-Asp phosphorelay involves an additional intermediate named Histidine-containing phosphotransfer protein (HPt). This multistep phosphorelay consists of a His-Asp-His-Asp sequential transfer of a phosphate group between first a His and an Asp of the HK protein, followed by the transfer to a conserved His of the HPt protein and finally the transfer to an Asp in the receiver domain of the RR protein.

The protein localises to the nucleus. Transcriptional activator that acts as a floral inducer to promote short-day (SD) flowering pathway. Activates Hd3a and other FT-like genes independently from Hd1. May also activate MADS-box transcription factors involved in flowering regulation. This Oryza sativa subsp. indica (Rice) protein is Two-component response regulator EHD1 (EHD1).